We begin with the raw amino-acid sequence, 205 residues long: Large ribosomal subunit protein bL25 (205 aa).

Belongs to the bacterial ribosomal protein bL25 family. CTC subfamily. As to quaternary structure, part of the 50S ribosomal subunit; part of the 5S rRNA/L5/L18/L25 subcomplex. Contacts the 5S rRNA. Binds to the 5S rRNA independently of L5 and L18.

Functionally, this is one of the proteins that binds to the 5S RNA in the ribosome where it forms part of the central protuberance. This is Large ribosomal subunit protein bL25 from Stutzerimonas stutzeri (strain A1501) (Pseudomonas stutzeri).